The primary structure comprises 130 residues: Large ribosomal subunit protein uL22 (130 aa).

The protein belongs to the universal ribosomal protein uL22 family. In terms of assembly, part of the 50S ribosomal subunit.

In terms of biological role, this protein binds specifically to 23S rRNA; its binding is stimulated by other ribosomal proteins, e.g. L4, L17, and L20. It is important during the early stages of 50S assembly. It makes multiple contacts with different domains of the 23S rRNA in the assembled 50S subunit and ribosome. Its function is as follows. The globular domain of the protein is located near the polypeptide exit tunnel on the outside of the subunit, while an extended beta-hairpin is found that lines the wall of the exit tunnel in the center of the 70S ribosome. The protein is Large ribosomal subunit protein uL22 of Clavibacter michiganensis subsp. michiganensis (strain NCPPB 382).